The primary structure comprises 826 residues: Leucine--tRNA ligase (826 aa).

A 'HIGH' region motif is present at residues 42–52; sequence PYPSGNLHMGH. The 'KMSKS' region motif lies at 581–585; that stretch reads KMSKS. ATP is bound at residue Lys-584.

Belongs to the class-I aminoacyl-tRNA synthetase family.

The protein resides in the cytoplasm. It carries out the reaction tRNA(Leu) + L-leucine + ATP = L-leucyl-tRNA(Leu) + AMP + diphosphate. The protein is Leucine--tRNA ligase of Desulforudis audaxviator (strain MP104C).